The chain runs to 146 residues: 3-dehydroquinate dehydratase (146 aa).

Residue Tyr-22 is the Proton acceptor of the active site. Substrate is bound by residues Asn-74, His-80, and Asp-87. His-100 acts as the Proton donor in catalysis. Substrate-binding positions include 101-102 (LS) and Arg-111.

It belongs to the type-II 3-dehydroquinase family. In terms of assembly, homododecamer.

It carries out the reaction 3-dehydroquinate = 3-dehydroshikimate + H2O. The protein operates within metabolic intermediate biosynthesis; chorismate biosynthesis; chorismate from D-erythrose 4-phosphate and phosphoenolpyruvate: step 3/7. Its function is as follows. Catalyzes a trans-dehydration via an enolate intermediate. The sequence is that of 3-dehydroquinate dehydratase from Clostridium perfringens (strain 13 / Type A).